The sequence spans 200 residues: LexA repressor (200 aa).

The H-T-H motif DNA-binding region spans 28-48; that stretch reads RAEISNRLGFRSANAAEEHLK. Residues S121 and K158 each act as for autocatalytic cleavage activity in the active site.

The protein belongs to the peptidase S24 family. As to quaternary structure, homodimer.

It catalyses the reaction Hydrolysis of Ala-|-Gly bond in repressor LexA.. Its function is as follows. Represses a number of genes involved in the response to DNA damage (SOS response), including recA and lexA. In the presence of single-stranded DNA, RecA interacts with LexA causing an autocatalytic cleavage which disrupts the DNA-binding part of LexA, leading to derepression of the SOS regulon and eventually DNA repair. The polypeptide is LexA repressor (Hahella chejuensis (strain KCTC 2396)).